A 381-amino-acid chain; its full sequence is Heme A synthase (381 aa).

The disordered stretch occupies residues 1–28 (MSNRTIFEEVSSDSKQQSSPTPGGIDRK). 8 consecutive transmembrane segments (helical) span residues 36–56 (IRVW…VGGL), 125–145 (VIGL…SIPT), 151–171 (LLLP…MVAS), 187–207 (LATH…YMFL), 230–250 (STGL…VAGI), 287–307 (LVQF…VVVW), 320–340 (FAFN…IVTV), and 344–364 (APVE…VLIL). H292 provides a ligand contact to heme. H352 provides a ligand contact to heme.

This sequence belongs to the COX15/CtaA family. Type 2 subfamily. Interacts with CtaB. Heme b is required as a cofactor.

The protein localises to the cell membrane. The catalysed reaction is Fe(II)-heme o + 2 A + H2O = Fe(II)-heme a + 2 AH2. It participates in porphyrin-containing compound metabolism; heme A biosynthesis; heme A from heme O: step 1/1. In terms of biological role, catalyzes the conversion of heme O to heme A by two successive hydroxylations of the methyl group at C8. The first hydroxylation forms heme I, the second hydroxylation results in an unstable dihydroxymethyl group, which spontaneously dehydrates, resulting in the formyl group of heme A. This is Heme A synthase from Ruegeria sp. (strain TM1040) (Silicibacter sp.).